Here is a 319-residue protein sequence, read N- to C-terminus: Ankyrin repeat domain-containing protein 1 (319 aa).

Residues 63 to 89 (EKQLEAELKKKKLEQRSKLENLEDLEI) adopt a coiled-coil conformation. ANK repeat units follow at residues 152–181 (YKRT…QIEF), 185–214 (LEST…KISA), 218–247 (LLST…DLNA), 251–280 (EGDT…DLTI), and 284–315 (AGKT…KTSR).

In terms of assembly, interacts with TTN/titin and YBX1.

Its subcellular location is the nucleus. Its function is as follows. May play an important role in endothelial cell activation. May act as a nuclear transcription factor that negatively regulates the expression of cardiac genes. This is Ankyrin repeat domain-containing protein 1 (ANKRD1) from Oryctolagus cuniculus (Rabbit).